Here is a 673-residue protein sequence, read N- to C-terminus: Cyclic nucleotide-binding domain-containing protein 2 (673 aa).

Polar residues predominate over residues 1 to 15; the sequence is MNRSANPEAASSTSH. A disordered region spans residues 1 to 89; sequence MNRSANPEAA…PQPKDRPGVQ (89 aa). Residues 43 to 86 show a composition bias toward basic and acidic residues; it reads PADKSDTTESKSESGSDSRSEEDKESPASIKEIKAETPQPKDRP. An a nucleoside 3',5'-cyclic phosphate-binding site is contributed by 206–329; it reads CYRSYTESLQ…ETQYRYNFFR (124 aa).

Testis-specific. Exclusively expressed in testicular germ cells while it is not present in mature sperm (at protein level).

It is found in the cytoplasm. The protein localises to the cytosol. Its function is as follows. Essential for male fertility. Plays an important role in spermatogenesis and regulates sperm motility by controlling the development of the flagellar bending of sperm. The chain is Cyclic nucleotide-binding domain-containing protein 2 (Cnbd2) from Mus musculus (Mouse).